Reading from the N-terminus, the 490-residue chain is Mitochondria-eating protein (490 aa).

Positions Ile-112–Leu-210 form a coiled coil. 2 stretches are compositionally biased toward low complexity: residues Ser-224–Arg-241 and Arg-456–Leu-490. Disordered stretches follow at residues Ser-224–Ser-253 and Ser-455–Leu-490.

The protein belongs to the MIEAP family.

It is found in the cytoplasm. The protein localises to the mitochondrion outer membrane. It localises to the mitochondrion matrix. In terms of biological role, key regulator of mitochondrial quality that mediates the repairing or degradation of unhealthy mitochondria in response to mitochondrial damage. Mediator of mitochondrial protein catabolic process (also named MALM) by mediating the degradation of damaged proteins inside mitochondria by promoting the accumulation in the mitochondrial matrix of hydrolases that are characteristic of the lysosomal lumen. Also involved in mitochondrion degradation of damaged mitochondria by promoting the formation of vacuole-like structures (named MIV), which engulf and degrade unhealthy mitochondria by accumulating lysosomes. Binds cardiolipin. May form molecular condensates (non-membrane-bounded organelles) within mitochondria that compartmentalize and promote cardiolipin metabolism. The chain is Mitochondria-eating protein (spata18) from Danio rerio (Zebrafish).